The primary structure comprises 102 residues: NADH-quinone oxidoreductase subunit K (102 aa).

Helical transmembrane passes span 5–25 (LGHFLSLGAMLFALSVIGIFL), 31–51 (IVLLMAIELMLLAVNMNFVAF), and 62–82 (IFVFFILTVAAAESAIGLALL).

This sequence belongs to the complex I subunit 4L family. As to quaternary structure, NDH-1 is composed of 14 different subunits. Subunits NuoA, H, J, K, L, M, N constitute the membrane sector of the complex.

The protein resides in the cell inner membrane. It catalyses the reaction a quinone + NADH + 5 H(+)(in) = a quinol + NAD(+) + 4 H(+)(out). NDH-1 shuttles electrons from NADH, via FMN and iron-sulfur (Fe-S) centers, to quinones in the respiratory chain. The immediate electron acceptor for the enzyme in this species is believed to be ubiquinone. Couples the redox reaction to proton translocation (for every two electrons transferred, four hydrogen ions are translocated across the cytoplasmic membrane), and thus conserves the redox energy in a proton gradient. This is NADH-quinone oxidoreductase subunit K from Variovorax paradoxus (strain S110).